The sequence spans 191 residues: MLLSDKDIRAEIDAGRVRIDPYDPSMVQPSSIDVRLDRYFRVFENHRYPHIDPAVEQPDLTRTVEPEGDEAFILHPGEFVLASTYEVISLPDDLASRLEGKSSLGRLGLVTHSTAGFIDPGFSGHVTLELSNLATLPIKLWPGMKIGQLCLFKLTSSAEFPYGSERYESRYQGQRGPTASRSFQNFHRTQV.

Residues 101–106 (KSSLGR), Asp119, 127–129 (TLE), Gln148, Tyr162, and Gln174 each bind dCTP. Glu129 serves as the catalytic Proton donor/acceptor. A disordered region spans residues 169–191 (SRYQGQRGPTASRSFQNFHRTQV). Over residues 171–191 (YQGQRGPTASRSFQNFHRTQV) the composition is skewed to polar residues.

Belongs to the dCTP deaminase family. As to quaternary structure, homotrimer.

The catalysed reaction is dCTP + 2 H2O = dUMP + NH4(+) + diphosphate. It functions in the pathway pyrimidine metabolism; dUMP biosynthesis; dUMP from dCTP: step 1/1. Bifunctional enzyme that catalyzes both the deamination of dCTP to dUTP and the hydrolysis of dUTP to dUMP without releasing the toxic dUTP intermediate. In Streptomyces griseus subsp. griseus (strain JCM 4626 / CBS 651.72 / NBRC 13350 / KCC S-0626 / ISP 5235), this protein is dCTP deaminase, dUMP-forming.